Here is a 545-residue protein sequence, read N- to C-terminus: MKFSSLAAATALVAGSVVAADLDPIVIKVGVRSALIPGWPKGGSKFFYKSNGTEFFMKGIAYQQEFSTNGTSSDKNNYQDPLADVESCRRDIPLMQQLQTNTIRVYAIDPKKDHKQCMKLLQDAGIYVVADLSEPSTSIIRDDPKWDDVLYTRYTSVVDELAQYSNVIGFFAGNEVSNNSTNTDASAFVKAAVRDMKAYIKQKNYRSMGVGYATNDDAEIRKDMTAYFNCNKQEESIDFWGYNIYSWCGDSSYTESGYDKVVEEFKTFNVPVFFAEYGCNEVQPRKFTEVQALYGDKMTPVVSGGIVYMYFQEENDYGLVKIEGGKPKKLPDFNSLQKQISKIKPSGVQMDSYKPTNTALSTCPKSSTWKASVKLPPTPNKDLCSCMVKSLSCVAKPSVTGKELGKLFGTVCGSDKDACKGITADATSGTYGAYSMCSPSEKLSFAFNQYYQHQSAKGNGANACDFGGAATAQKSEKPSGSCANLVDQAGQDGTGSVTSAPGSGGNKPDQGAASTISAPSVNLGIVKLGAYIFCAVLAGAGMILI.

A signal peptide spans 1–19 (MKFSSLAAATALVAGSVVA). N51 and N69 each carry an N-linked (GlcNAc...) asparagine glycan. C88 and C117 are disulfide-bonded. Residues Y106, 133–141 (SEPSTSIIR), N174, and E175 contribute to the (1,3-beta-D-glucosyl)n site. The active-site Proton donor is the E175. N179 carries an N-linked (GlcNAc...) asparagine glycan. (1,3-beta-D-glucosyl)n-binding residues include D216 and R221. 5 disulfides stabilise this stretch: C230–C363, C248–C279, C384–C437, C393–C464, and C412–C419. Catalysis depends on E276, which acts as the Nucleophile. Y308 provides a ligand contact to (1,3-beta-D-glucosyl)n. The interval 493–513 (GTGSVTSAPGSGGNKPDQGAA) is disordered. A512 is lipidated: GPI-anchor amidated alanine. The propeptide at 513-545 (ASTISAPSVNLGIVKLGAYIFCAVLAGAGMILI) is removed in mature form.

This sequence belongs to the glycosyl hydrolase 72 family. Post-translationally, the GPI-anchor is attached to the protein in the endoplasmic reticulum and serves to target the protein to the cell surface. There, the glucosamine-inositol phospholipid moiety is cleaved off and the GPI-modified mannoprotein is covalently attached via its lipidless GPI glycan remnant to the 1,6-beta-glucan of the outer cell wall layer.

It is found in the secreted. It localises to the cell membrane. The protein localises to the cell wall. Functionally, splits internally a 1,3-beta-glucan molecule and transfers the newly generated reducing end (the donor) to the non-reducing end of another 1,3-beta-glucan molecule (the acceptor) forming a 1,3-beta linkage, resulting in the elongation of 1,3-beta-glucan chains in the cell wall. Involved in cell wall biosynthesis and morphogenesis. The protein is 1,3-beta-glucanosyltransferase ARB_07487 of Arthroderma benhamiae (strain ATCC MYA-4681 / CBS 112371) (Trichophyton mentagrophytes).